The chain runs to 546 residues: uncharacterized protein (546 aa).

In terms of domain architecture, SLH spans 52–123 (SVAELRDVQP…NTIEQLLQEN (72 aa)).

This sequence belongs to the OprB family.

This is an uncharacterized protein from Synechocystis sp. (strain ATCC 27184 / PCC 6803 / Kazusa).